A 197-amino-acid chain; its full sequence is Probable host range protein 2 (197 aa).

Residues D172–E197 form a disordered region. The span at D174–E197 shows a compositional bias: acidic residues.

The protein belongs to the poxviridae C7 protein family.

The chain is Probable host range protein 2 from Ovis aries (Sheep).